Reading from the N-terminus, the 506-residue chain is Anaerobic nitric oxide reductase transcription regulator NorR (506 aa).

Asp57 is subject to 4-aspartylphosphate. The Sigma-54 factor interaction domain maps to 187–416 (MIGLSPAMTQ…LEHAIHRAVV (230 aa)). ATP contacts are provided by residues 215-222 (GETGTGKE) and 278-287 (ADNGTLFLDE). The segment at residues 481–500 (WAASARALETDVANLHRLAK) is a DNA-binding region (H-T-H motif).

Its pathway is nitrogen metabolism; nitric oxide reduction. In terms of biological role, required for the expression of anaerobic nitric oxide (NO) reductase, acts as a transcriptional activator for at least the norVW operon. Activation also requires sigma-54. The protein is Anaerobic nitric oxide reductase transcription regulator NorR of Salmonella dublin (strain CT_02021853).